Consider the following 355-residue polypeptide: Anthranilate phosphoribosyltransferase (355 aa).

Residues glycine 85, 88-89 (GD), threonine 93, 95-98 (NIST), 113-121 (KHGNRAASS), and serine 125 each bind 5-phospho-alpha-D-ribose 1-diphosphate. Residue glycine 85 coordinates anthranilate. Serine 97 serves as a coordination point for Mg(2+). Asparagine 116 lines the anthranilate pocket. Arginine 171 is a binding site for anthranilate. Aspartate 229 and glutamate 230 together coordinate Mg(2+).

Belongs to the anthranilate phosphoribosyltransferase family. Homodimer. Requires Mg(2+) as cofactor.

It carries out the reaction N-(5-phospho-beta-D-ribosyl)anthranilate + diphosphate = 5-phospho-alpha-D-ribose 1-diphosphate + anthranilate. It participates in amino-acid biosynthesis; L-tryptophan biosynthesis; L-tryptophan from chorismate: step 2/5. Catalyzes the transfer of the phosphoribosyl group of 5-phosphorylribose-1-pyrophosphate (PRPP) to anthranilate to yield N-(5'-phosphoribosyl)-anthranilate (PRA). The chain is Anthranilate phosphoribosyltransferase from Acidothermus cellulolyticus (strain ATCC 43068 / DSM 8971 / 11B).